A 176-amino-acid polypeptide reads, in one-letter code: NADH-dependent flavin reductase (176 aa).

Residues 39–46 (EDSVHGMT) and 48–49 (NA) contribute to the FAD site. An NAD(+)-binding site is contributed by S52. Residues 63-65 (SIS), 69-70 (KM), and 95-96 (HF) contribute to the FAD site. Residues H137 and 157-160 (FYTG) contribute to the NAD(+) site.

It belongs to the non-flavoprotein flavin reductase family. As to quaternary structure, homodimer. 4-nitrophenol 2-monooxygenase complex consists of an oxygenase component NphA1 and a flavin reductase component NphA2.

It catalyses the reaction a reduced flavin + NAD(+) = an oxidized flavin + NADH + 2 H(+). In terms of biological role, catalyzes the reduction of FAD with the concomitant oxidation of NADH. NAD is the physiological electron donor. Subsequently, the reduced flavins diffuse to the oxygenase component NphA2. The protein is NADH-dependent flavin reductase (nphA2) of Rhodococcus sp.